The sequence spans 296 residues: GTPase Era (296 aa).

Residues 7-174 (KCSMNAIVGT…INYLCEISPS (168 aa)) enclose the Era-type G domain. The segment at 15 to 22 (GTTNAGKS) is G1. A GTP-binding site is contributed by 15 to 22 (GTTNAGKS). The segment at 41 to 45 (QTTRV) is G2. The interval 62-65 (DTPG) is G3. GTP-binding positions include 62–66 (DTPGI) and 124–127 (NKID). The segment at 124–127 (NKID) is G4. A G5 region spans residues 153 to 155 (ISA). One can recognise a KH type-2 domain in the interval 205–282 (LHHELPYSLS…HLFLFVKVRE (78 aa)).

Belongs to the TRAFAC class TrmE-Era-EngA-EngB-Septin-like GTPase superfamily. Era GTPase family. As to quaternary structure, monomer.

It is found in the cytoplasm. The protein localises to the cell inner membrane. In terms of biological role, an essential GTPase that binds both GDP and GTP, with rapid nucleotide exchange. Plays a role in 16S rRNA processing and 30S ribosomal subunit biogenesis and possibly also in cell cycle regulation and energy metabolism. The protein is GTPase Era of Ehrlichia canis (strain Jake).